The primary structure comprises 935 residues: Protocadherin gamma-A11 (935 aa).

The signal sequence occupies residues 1–29 (MANRLQRGDRSRLLLLLCIFLGTLRGFRA). Cadherin domains lie at 30–134 (RQIR…APSF), 135–243 (QEDE…IPMF), 244–348 (TQSV…APEI), 349–453 (TITS…PPVF), 454–563 (PHSS…APEI), and 571–677 (DGST…ADLG). Over 30 to 693 (RQIRYSVPEE…NSEASDLSLY (664 aa)) the chain is Extracellular. Residue Asn-48 is glycosylated (N-linked (GlcNAc...) asparagine). Residues Asn-255, Asn-266, Asn-420, and Asn-546 are each glycosylated (N-linked (GlcNAc...) asparagine). A helical transmembrane segment spans residues 694 to 714 (LVVAVAAVSCIFLVFVIVLLA). Topologically, residues 715–935 (LRLWRWHKSR…KKKSGKKEKK (221 aa)) are cytoplasmic. Disordered regions lie at residues 805–844 (CDPT…WPNN) and 905–935 (ATLT…KEKK). A compositionally biased stretch (polar residues) spans 807 to 844 (PTSNQQAPPNTDWRFSQAQRPGTSGSQNGDDTGTWPNN). Basic residues predominate over residues 925-935 (NKKKSGKKEKK).

The protein resides in the cell membrane. Potential calcium-dependent cell-adhesion protein. May be involved in the establishment and maintenance of specific neuronal connections in the brain. This Pan troglodytes (Chimpanzee) protein is Protocadherin gamma-A11 (PCDHGA11).